We begin with the raw amino-acid sequence, 417 residues long: uncharacterized protein (417 aa).

The segment at methionine 1–proline 24 is disordered. The next 4 helical transmembrane spans lie at valine 54–alanine 74, leucine 79–isoleucine 99, alanine 117–valine 137, and methionine 143–methionine 163. Residues aspartate 211–aspartate 228 are compositionally biased toward basic and acidic residues. Disordered regions lie at residues aspartate 211–aspartate 283 and isoleucine 308–lysine 417. Residues serine 312–threonine 322 are compositionally biased toward polar residues. Low complexity predominate over residues glutamate 336–arginine 347. A compositionally biased stretch (polar residues) spans serine 391 to phenylalanine 401.

This sequence belongs to the chlamydial CPn_0443/CT_005/TC_0273 family.

The protein resides in the cell membrane. This is an uncharacterized protein from Chlamydia pneumoniae (Chlamydophila pneumoniae).